The primary structure comprises 219 residues: Putative germin-like protein 8-1 (219 aa).

A signal peptide spans 1–23 (MASFISFLLLAALIGMASWQAIA). An intrachain disulfide couples C33 to C48. N-linked (GlcNAc...) asparagine glycosylation is found at N53 and N79. A Cupin type-1 domain is found at 63–215 (AMLDKPRDTA…AFQVDKKIID (153 aa)). Residues H112, H114, E119, and H160 each contribute to the Mn(2+) site.

It belongs to the germin family. Oligomer (believed to be a pentamer but probably hexamer).

The protein resides in the secreted. It localises to the extracellular space. It is found in the apoplast. In terms of biological role, plays a role in broad-spectrum disease resistance. Probably has no oxalate oxidase activity even if the active site is conserved. This is Putative germin-like protein 8-1 from Oryza sativa subsp. japonica (Rice).